The primary structure comprises 409 residues: MAQNFTKLNPQFENIIFEHDDNQMILNFGPQHPSSHGQLRLILELEGEKIIKATPEIGYLHRGCEKLGENMTYNEYMPTTDRLDYTSSTSNNYAYAYAVETLLNLEIPRRAQVIRTILLELNRMISHIFFISVHALDVGAMSVFLYAFKTREYGLDLMEDYCGARLTHNAIRIGGVPLDLPPNWLEGLKKFLGEMRECKKLIQGLLDKNRIWRMRLENVGVVTPKMAQSWGMSGIMLRGTGIAYDIRKEEPYELYKELDFDVPVGNYGDSYDRYCLYMLEIDESIRIIEQLIPMYAKTDTPIMAQNPHYISAPKEDIMTQNYALMQHFVLVAQGMRPPIGEVYAPTESPKGELGFFIHSEGEPYPHRLKIRAPSFYHIGALSDILVGQYLADAVTVIGSTNAVFGEVDR.

It belongs to the complex I 49 kDa subunit family. In terms of assembly, NDH-1 is composed of 14 different subunits. Subunits NuoB, C, D, E, F, and G constitute the peripheral sector of the complex.

It is found in the cell inner membrane. The catalysed reaction is a quinone + NADH + 5 H(+)(in) = a quinol + NAD(+) + 4 H(+)(out). Its function is as follows. NDH-1 shuttles electrons from NADH, via FMN and iron-sulfur (Fe-S) centers, to quinones in the respiratory chain. The immediate electron acceptor for the enzyme in this species is believed to be ubiquinone. Couples the redox reaction to proton translocation (for every two electrons transferred, four hydrogen ions are translocated across the cytoplasmic membrane), and thus conserves the redox energy in a proton gradient. This is NADH-quinone oxidoreductase subunit D from Helicobacter pylori (strain G27).